The sequence spans 456 residues: Vitamin K-dependent protein C (456 aa).

The signal sequence occupies residues 1–20; that stretch reads MWQLASLSLLLTICGTCSTA. The propeptide occupies 21–42; that stretch reads APPGSVFSSSESAHQVLRIRKR. Positions 47–88 constitute a Gla domain; sequence LEEIRAGSLERECMEEICDFEEAKEIFQNVDDTLAYWSKYVD. 4-carboxyglutamate occurs at positions 48, 49, 56, 58, 61, 62, 67, 68, and 71. C59 and C64 are oxidised to a cystine. Intrachain disulfides connect C92/C111, C101/C106, C105/C120, and C122/C131. 2 consecutive EGF-like domains span residues 97-132 and 136-176; these read PEHACDSPCCGHGSCIDGIGAFHCDCGRGWEGRFCQ and SYIN…LQCQ. (3R)-3-hydroxyaspartate is present on D113. A glycan (N-linked (GlcNAc...) asparagine) is linked at N139. 5 disulfides stabilise this stretch: C140/C151, C147/C160, C162/C175, C183/C318, and C237/C253. An N-linked (GlcNAc...) asparagine glycan is attached at N202. The 235-residue stretch at 211–445 folds into the Peptidase S1 domain; sequence LVNGKVTRRG…YLDWIHSHIR (235 aa). H252 acts as the Charge relay system in catalysis. A glycan (N-linked (GlcNAc...) asparagine) is linked at N289. The active-site Charge relay system is D298. N350 carries N-linked (GlcNAc...) asparagine glycosylation. 2 disulfide bridges follow: C368–C382 and C393–C421. S397 acts as the Charge relay system in catalysis.

This sequence belongs to the peptidase S1 family. As to quaternary structure, synthesized as a single chain precursor, which is cleaved into a light chain and a heavy chain held together by a disulfide bond. The enzyme is then activated by thrombin, which cleaves a tetradecapeptide from the amino end of the heavy chain; this reaction, which occurs at the surface of endothelial cells, is strongly promoted by thrombomodulin. Post-translationally, the vitamin K-dependent, enzymatic carboxylation of some Glu residues allows the modified protein to bind calcium. In terms of processing, the iron and 2-oxoglutarate dependent 3-hydroxylation of aspartate and asparagine is (R) stereospecific within EGF domains. In terms of tissue distribution, plasma; synthesized in the liver.

The protein localises to the secreted. The protein resides in the golgi apparatus. It localises to the endoplasmic reticulum. It carries out the reaction Degradation of blood coagulation factors Va and VIIIa.. Protein C is a vitamin K-dependent serine protease that regulates blood coagulation by inactivating factors Va and VIIIa in the presence of calcium ions and phospholipids. Exerts a protective effect on the endothelial cell barrier function. The sequence is that of Vitamin K-dependent protein C (PROC) from Canis lupus familiaris (Dog).